Reading from the N-terminus, the 1010-residue chain is Phosphatidylserine decarboxylase proenzyme 2 (1010 aa).

C2 domains are found at residues 1–114 and 247–370; these read MSQA…SSWE and DFES…DKPC. Ca(2+) is bound by residues aspartate 342, serine 345, and aspartate 348. One can recognise an EF-hand domain in the interval 458-493; sequence LRRQLWMHLLQGNDTQMKGTLDLIELNYFVDCLGSN. Catalysis depends on charge relay system; for autoendoproteolytic cleavage activity residues aspartate 734, histidine 793, and serine 880. The active-site Schiff-base intermediate with substrate; via pyruvic acid; for decarboxylase activity is serine 880. A Pyruvic acid (Ser); by autocatalysis modification is found at serine 880.

It belongs to the phosphatidylserine decarboxylase family. PSD-B subfamily. Eukaryotic type II sub-subfamily. As to quaternary structure, heterodimer of a large membrane-associated beta subunit and a small pyruvoyl-containing alpha subunit. Interacts with pstB2. This interaction may be a means to structurally tether the donor membrane (ER) harboring PstB2 to acceptor membranes (Golgi/endosomes) harboring PSD2 during PtdSer transport to the site of PtdEtn synthesis. It depends on pyruvate as a cofactor. The cofactor is Ca(2+). Post-translationally, is synthesized initially as an inactive proenzyme. Formation of the active enzyme involves a self-maturation process in which the active site pyruvoyl group is generated from an internal serine residue via an autocatalytic post-translational modification. Two non-identical subunits are generated from the proenzyme in this reaction, and the pyruvate is formed at the N-terminus of the alpha chain, which is derived from the carboxyl end of the proenzyme. The autoendoproteolytic cleavage occurs by a canonical serine protease mechanism, in which the side chain hydroxyl group of the serine supplies its oxygen atom to form the C-terminus of the beta chain, while the remainder of the serine residue undergoes an oxidative deamination to produce ammonia and the pyruvoyl prosthetic group on the alpha chain. During this reaction, the Ser that is part of the protease active site of the proenzyme becomes the pyruvoyl prosthetic group, which constitutes an essential element of the active site of the mature decarboxylase.

It is found in the golgi apparatus membrane. The protein resides in the endosome membrane. It catalyses the reaction a 1,2-diacyl-sn-glycero-3-phospho-L-serine + H(+) = a 1,2-diacyl-sn-glycero-3-phosphoethanolamine + CO2. The protein operates within phospholipid metabolism; phosphatidylethanolamine biosynthesis; phosphatidylethanolamine from CDP-diacylglycerol: step 2/2. Its function is as follows. Catalyzes the formation of phosphatidylethanolamine (PtdEtn) from phosphatidylserine (PtdSer). Plays a central role in phospholipid metabolism and in the interorganelle trafficking of phosphatidylserine. In Komagataella phaffii (strain GS115 / ATCC 20864) (Yeast), this protein is Phosphatidylserine decarboxylase proenzyme 2.